The chain runs to 176 residues: Cytochrome b561 homolog 1 (176 aa).

Residues 1–7 (MNRFSKT) lie on the Cytoplasmic side of the membrane. The chain crosses the membrane as a helical span at residues 8–28 (QIYLHWITLLFVAITYAAMEL). His12 provides a ligand contact to heme b. The Periplasmic portion of the chain corresponds to 29 to 45 (RGWFPKGSSTYLLMRET). His46 serves as a coordination point for heme b. The helical transmembrane segment at 46–63 (HYNAGIFVWVLMFSRLII) threads the bilayer. Over 64 to 85 (KHRYSDPSIVPPPPAWQMKAAS) the chain is Cytoplasmic. A helical transmembrane segment spans residues 86 to 106 (LMHIMLYITFLALPLLGIALM). Over 107–141 (AYSGKSWSFLGFNVSPFVTPNSEIKALIKNIHETW) the chain is Periplasmic. Heme b is bound by residues His138 and His152. The chain crosses the membrane as a helical span at residues 142–162 (ANIGYFLIAAHAGAALFHHYI). Over 163 to 176 (QKDNTLLRMMPRRK) the chain is Cytoplasmic.

Belongs to the cytochrome b561 family. Heme b serves as cofactor.

Its subcellular location is the cell inner membrane. The sequence is that of Cytochrome b561 homolog 1 (yodB) from Escherichia coli (strain K12).